The primary structure comprises 282 residues: Chromatin modification-related protein YNG2 (282 aa).

A coiled-coil region spans residues Leu35 to Lys86. The interval Asp123–Glu217 is disordered. Positions Ala129–Ser143 are enriched in low complexity. Position 183 is a phosphoserine (Ser183). A Phosphothreonine modification is found at Thr185. Ser188 bears the Phosphoserine mark. The span at Ile191 to Asn203 shows a compositional bias: basic and acidic residues. Positions Ser204–Pro214 are enriched in polar residues. The PHD-type zinc finger occupies Thr222–Glu271. Residues Cys225, Cys227, Cys238, Cys243, His249, Cys252, Cys265, and Cys268 each coordinate Zn(2+).

This sequence belongs to the ING family. Interacts with H3K4me3 and to a lesser extent with H3K4me2. Component of the NuA4 histone acetyltransferase complex composed of at least ACT1, ARP4, YAF9, VID21, SWC4, EAF3, EAF5, EAF6, EAF7, EPL1, ESA1, TRA1 and YNG2.

It is found in the nucleus. Component of the NuA4 histone acetyltransferase complex which is involved in transcriptional activation of selected genes principally by acetylation of nucleosomal histone H4 and H2A. The NuA4 complex is also involved in DNA repair. Involved in cell cycle progression and meiosis. This chain is Chromatin modification-related protein YNG2 (YNG2), found in Saccharomyces cerevisiae (strain ATCC 204508 / S288c) (Baker's yeast).